Here is a 332-residue protein sequence, read N- to C-terminus: Nuclear hormone receptor family member nhr-9 (332 aa).

A DNA-binding region (nuclear receptor) is located at residues 11-85 (ERRCAICSKL…MGMRIVTNQY (75 aa)). NR C4-type zinc fingers lie at residues 14–34 (CAIC…CNAC) and 50–73 (CINN…YNKC). The NR LBD domain occupies 101–332 (DRSNKLMNFQ…KRLCAELLGA (232 aa)).

This sequence belongs to the nuclear hormone receptor family.

It is found in the nucleus. In terms of biological role, orphan nuclear receptor. The sequence is that of Nuclear hormone receptor family member nhr-9 (nhr-9) from Caenorhabditis elegans.